The primary structure comprises 524 residues: Na(+)/H(+) antiporter NhaB (524 aa).

Transmembrane regions (helical) follow at residues 13–33, 98–118, 140–160, 239–259, 304–324, 325–345, 358–378, 448–468, and 479–499; these read FLGN…IINP, LLLV…LFVF, AFLS…SVSV, FFIR…LVCL, AIIG…VGLV, GLSV…HSLG, LTVF…TPII, ATPN…APLI, and ALPY…FLLV.

The protein belongs to the NhaB Na(+)/H(+) (TC 2.A.34) antiporter family.

The protein localises to the cell inner membrane. The enzyme catalyses 2 Na(+)(in) + 3 H(+)(out) = 2 Na(+)(out) + 3 H(+)(in). In terms of biological role, na(+)/H(+) antiporter that extrudes sodium in exchange for external protons. In Yersinia pseudotuberculosis serotype O:3 (strain YPIII), this protein is Na(+)/H(+) antiporter NhaB.